The following is a 518-amino-acid chain: Dihydro-ML-236C monooxygenase mlcC (518 aa).

The Cytoplasmic portion of the chain corresponds to 1-31 (MLGQVLLTVESYQWVSTPQALVAVAVLLSLI). The helical; Signal-anchor for type II membrane protein transmembrane segment at 32–48 (AYRLRGRQSELQVYNPK) threads the bilayer. Over 49–518 (KWWELTTMRA…EDIPLPHDRC (470 aa)) the chain is Lumenal. A heme-binding site is contributed by cysteine 454.

It belongs to the cytochrome P450 family. It depends on heme as a cofactor.

It is found in the endoplasmic reticulum membrane. It catalyses the reaction dihydro-ML-236C carboxylate + reduced [NADPH--hemoprotein reductase] + O2 = ML-236C carboxylate + oxidized [NADPH--hemoprotein reductase] + 2 H2O + H(+). The enzyme catalyses ML-236C carboxylate + reduced [NADPH--hemoprotein reductase] + O2 = ML-236A carboxylate + oxidized [NADPH--hemoprotein reductase] + H2O + H(+). The protein operates within polyketide biosynthesis. Its function is as follows. Dihydro-ML-236C carboxylate monooxygenase; part of the gene cluster that mediates the biosynthesis of compactin, also known as mevastatin or ML-236B, and which acts as a potent competitive inhibitor of HMG-CoA reductase. Compactin biosynthesis is performed in two stages. The first stage is catalyzed by the nonaketide synthase mlcA, which belongs to type I polyketide synthases and catalyzes the iterative nine-step formation of the polyketide. This PKS stage is completed by the action of dehydrogenase mlcG, which catalyzes the NADPH-dependent reduction of the unsaturated tetra-, penta- and heptaketide intermediates that arise during the mlcA-mediated biosynthesis of the nonaketide chain and leads to dihydro-ML-236C carboxylate. Covalently bound dihydro-ML-236C carboxylate is released from mlcA by the mlcF esterase. Conversion of dihydro-ML-236C carboxylate into ML-236A carboxylate is subsequently performed with the participation of molecular oxygen and P450 monoogygenase mlcC. Finally, mlcH performs the conversion of ML-236A carboxylate to ML-236B/compactin carboxylate through the addition of the side-chain diketide moiety produced by the diketide synthase mlcB. The chain is Dihydro-ML-236C monooxygenase mlcC from Penicillium citrinum.